The chain runs to 161 residues: Phosphopantetheine adenylyltransferase (161 aa).

Thr-10 contributes to the substrate binding site. Residues 10–11 (TF) and His-18 contribute to the ATP site. Substrate contacts are provided by Lys-42, Leu-75, and Arg-89. Residues 90–92 (GLR), Glu-100, and 125–131 (YSFLSSS) each bind ATP.

This sequence belongs to the bacterial CoaD family. As to quaternary structure, homohexamer. Mg(2+) serves as cofactor.

Its subcellular location is the cytoplasm. The catalysed reaction is (R)-4'-phosphopantetheine + ATP + H(+) = 3'-dephospho-CoA + diphosphate. The protein operates within cofactor biosynthesis; coenzyme A biosynthesis; CoA from (R)-pantothenate: step 4/5. Reversibly transfers an adenylyl group from ATP to 4'-phosphopantetheine, yielding dephospho-CoA (dPCoA) and pyrophosphate. The chain is Phosphopantetheine adenylyltransferase from Thermodesulfovibrio yellowstonii (strain ATCC 51303 / DSM 11347 / YP87).